Here is a 208-residue protein sequence, read N- to C-terminus: Large ribosomal subunit protein uL4 (208 aa).

The disordered stretch occupies residues 44–79 (QRQGTHKSKERSEISGSTRKIGRQKGGGGARRGDMN).

Belongs to the universal ribosomal protein uL4 family. Part of the 50S ribosomal subunit.

Its function is as follows. One of the primary rRNA binding proteins, this protein initially binds near the 5'-end of the 23S rRNA. It is important during the early stages of 50S assembly. It makes multiple contacts with different domains of the 23S rRNA in the assembled 50S subunit and ribosome. In terms of biological role, forms part of the polypeptide exit tunnel. The polypeptide is Large ribosomal subunit protein uL4 (Bacteroides thetaiotaomicron (strain ATCC 29148 / DSM 2079 / JCM 5827 / CCUG 10774 / NCTC 10582 / VPI-5482 / E50)).